The chain runs to 49 residues: DNA-directed RNA polymerase subunit Rpo12 (49 aa).

3 residues coordinate Zn(2+): Cys-11, Cys-27, and Cys-30.

It belongs to the archaeal Rpo12/eukaryotic RPC10 RNA polymerase subunit family. Part of the RNA polymerase complex. The cofactor is Zn(2+).

The protein resides in the cytoplasm. It carries out the reaction RNA(n) + a ribonucleoside 5'-triphosphate = RNA(n+1) + diphosphate. Its function is as follows. DNA-dependent RNA polymerase (RNAP) catalyzes the transcription of DNA into RNA using the four ribonucleoside triphosphates as substrates. In Pyrococcus furiosus (strain ATCC 43587 / DSM 3638 / JCM 8422 / Vc1), this protein is DNA-directed RNA polymerase subunit Rpo12.